The following is a 565-amino-acid chain: NAD-dependent malic enzyme (565 aa).

Tyr104 functions as the Proton donor in the catalytic mechanism. Arg157 contributes to the NAD(+) binding site. Lys175 (proton acceptor) is an active-site residue. Positions 246, 247, and 270 each coordinate a divalent metal cation. 2 residues coordinate NAD(+): Asp270 and Asn418.

The protein belongs to the malic enzymes family. As to quaternary structure, homotetramer. Requires Mg(2+) as cofactor. Mn(2+) is required as a cofactor.

It carries out the reaction (S)-malate + NAD(+) = pyruvate + CO2 + NADH. The catalysed reaction is oxaloacetate + H(+) = pyruvate + CO2. In Proteus mirabilis (strain HI4320), this protein is NAD-dependent malic enzyme.